Reading from the N-terminus, the 822-residue chain is Valine--tRNA ligase (822 aa).

The 'HIGH' region signature appears at proline 41 to histidine 51. The 'KMSKS' region signature appears at lysine 511–serine 515. Lysine 514 contacts ATP. Residues glutamate 765 to lysine 822 adopt a coiled-coil conformation.

Belongs to the class-I aminoacyl-tRNA synthetase family. ValS type 1 subfamily. Monomer.

Its subcellular location is the cytoplasm. It carries out the reaction tRNA(Val) + L-valine + ATP = L-valyl-tRNA(Val) + AMP + diphosphate. Catalyzes the attachment of valine to tRNA(Val). As ValRS can inadvertently accommodate and process structurally similar amino acids such as threonine, to avoid such errors, it has a 'posttransfer' editing activity that hydrolyzes mischarged Thr-tRNA(Val) in a tRNA-dependent manner. In Mesomycoplasma hyopneumoniae (strain J / ATCC 25934 / NCTC 10110) (Mycoplasma hyopneumoniae), this protein is Valine--tRNA ligase.